Here is a 735-residue protein sequence, read N- to C-terminus: Dolichyl-diphosphooligosaccharide--protein glycosyltransferase subunit STT3B (735 aa).

Residues 1–38 (MGGKSEPAKSESMATKPDLLNTSFFSFKSLKLKTKQQE) lie on the Cytoplasmic side of the membrane. Residues 39 to 59 (LLLRISILGLVYILAFIARLF) form a helical membrane-spanning segment. Over 60 to 142 (SVLRYESMIH…VHIREVCVLT (83 aa)) the chain is Lumenal. A DXD motif 1 motif is present at residues 70–72 (EFD). Asp-72 serves as a coordination point for Mn(2+). Residues 143 to 161 (APFFASNTTLVAYFFGKEL) form a helical membrane-spanning segment. The Cytoplasmic segment spans residues 162 to 163 (WD). A helical transmembrane segment spans residues 164–181 (TGAGLVAAVLIAICPGYI). Residues 182–192 (SRSVAGSYDNE) are Lumenal-facing. Mn(2+) is bound by residues Asp-190 and Glu-192. The DXD motif 2 motif lies at 190–192 (DNE). Residues 193–212 (AVAIFALLLTFYLFVKAVNT) form a helical membrane-spanning segment. At 213 to 214 (GS) the chain is on the cytoplasmic side. Residues 215–229 (LAWALASAFGYFYMV) form a helical membrane-spanning segment. Residues 230–234 (SAWGG) are Lumenal-facing. The chain crosses the membrane as a helical span at residues 235–251 (YVFIINLVPLYVLVLLI). Topologically, residues 252 to 256 (TGRYS) are cytoplasmic. A helical membrane pass occupies residues 257 to 282 (MRLYIAYNCMYILGMLLAMQIRFVGF). Residues 283-290 (QHVQSGEH) lie on the Lumenal side of the membrane. Residues 291–310 (MGAMGVFLLMQVFYFLDWVK) form a helical membrane-spanning segment. Residues 311 to 326 (YQLNDTKLFQTFLRIT) lie on the Cytoplasmic side of the membrane. Residues 327-347 (VTSAILVGGVAVGVGTASGYI) traverse the membrane as a helical segment. At 348-380 (SPWTGRFYSLLDPTYAKDHIPIIASVSEHQPTA) the chain is on the lumenal side. Positions 372–375 (SVSE) match the SVSE motif motif. The chain crosses the membrane as a helical span at residues 381 to 403 (WSSFMFDYHILLFLFPAGLYFCF). The Cytoplasmic segment spans residues 404–409 (KRLTDA). The helical transmembrane segment at 410 to 426 (TIFIVMYGLTSLYFAGV) threads the bilayer. Residues 427–430 (MVRL) lie on the Lumenal side of the membrane. Residue Arg-429 participates in dolichyl diphosphooligosaccharide binding. Residues 431–452 (ILVATPAVCLISAIAVSATIKN) traverse the membrane as a helical segment. Residues 453–494 (LTSLLRTKQKVSQTGSTKGAGSSKASSKVTLDQSQPFQKNGA) lie on the Cytoplasmic side of the membrane. Residues 495–515 (IALLVGVFYLLSRYAIHCTWV) traverse the membrane as a helical segment. At 516-735 (TAEAYSSPSI…YRVKPPTNRL (220 aa)) the chain is on the lumenal side. The interval 562-564 (WWD) is interacts with target acceptor peptide in protein substrate. Residues 562–566 (WWDYG) carry the WWDYG motif motif. Tyr-567 provides a ligand contact to dolichyl diphosphooligosaccharide. Asn-574 and Asn-581 each carry an N-linked (GlcNAc...) asparagine glycan. Asn-585 carries an N-linked (GlcNAc...) (high mannose) asparagine glycan. The short motif at 629–636 (DINKFLWM) is the DK motif element.

The protein belongs to the STT3 family. In terms of assembly, component of the oligosaccharyltransferase (OST) complex. Mg(2+) serves as cofactor. Requires Mn(2+) as cofactor. Expressed preferentially in the root but also in the shoot.

It is found in the endoplasmic reticulum membrane. It catalyses the reaction a di-trans,poly-cis-dolichyl diphosphooligosaccharide + L-asparaginyl-[protein] = N(4)-(oligosaccharide-(1-&gt;4)-N-acetyl-beta-D-glucosaminyl-(1-&gt;4)-N-acetyl-beta-D-glucosaminyl)-L-asparaginyl-[protein] + a di-trans,poly-cis-dolichyl diphosphate + H(+). The protein operates within protein modification; protein glycosylation. Its function is as follows. Catalytic subunit of the oligosaccharyl transferase (OST) complex that catalyzes the initial transfer of a defined glycan (Glc(3)Man(9)GlcNAc(2) in eukaryotes) from the lipid carrier dolichol-pyrophosphate to an asparagine residue within an Asn-X-Ser/Thr consensus motif in nascent polypeptide chains, the first step in protein N-glycosylation. N-glycosylation occurs cotranslationally and the complex associates with the Sec61 complex at the channel-forming translocon complex that mediates protein translocation across the endoplasmic reticulum (ER). All subunits are required for a maximal enzyme activity. This subunit contains the active site and the acceptor peptide and donor lipid-linked oligosaccharide (LLO) binding pockets. This Arabidopsis thaliana (Mouse-ear cress) protein is Dolichyl-diphosphooligosaccharide--protein glycosyltransferase subunit STT3B (STT3B).